A 312-amino-acid polypeptide reads, in one-letter code: Glyoxylate/hydroxypyruvate reductase A (312 aa).

Arginine 227 is an active-site residue. Residue histidine 275 is the Proton donor of the active site.

The protein belongs to the D-isomer specific 2-hydroxyacid dehydrogenase family. GhrA subfamily.

The protein localises to the cytoplasm. It catalyses the reaction glycolate + NADP(+) = glyoxylate + NADPH + H(+). The enzyme catalyses (R)-glycerate + NAD(+) = 3-hydroxypyruvate + NADH + H(+). The catalysed reaction is (R)-glycerate + NADP(+) = 3-hydroxypyruvate + NADPH + H(+). Catalyzes the NADPH-dependent reduction of glyoxylate and hydroxypyruvate into glycolate and glycerate, respectively. This chain is Glyoxylate/hydroxypyruvate reductase A, found in Enterobacter sp. (strain 638).